We begin with the raw amino-acid sequence, 489 residues long: L-asparagine permease (489 aa).

Helical transmembrane passes span 38 to 58 (HVNM…GAGG), 62 to 82 (DAGP…FFVV), 113 to 133 (VAGW…ITAI), 150 to 170 (VLAL…VKIF), 175 to 195 (FWFA…GIFL), 223 to 243 (VMPV…LELV), 268 to 288 (VALF…SSLY), 302 to 322 (IGVP…AMSS), 357 to 377 (YGGI…NYLV), 382 to 402 (FEIV…IIMI), 426 to 446 (SPVT…LMWN), and 452 to 472 (RKTV…WFGV).

Belongs to the amino acid-polyamine-organocation (APC) superfamily. Amino acid transporter (AAT) (TC 2.A.3.1) family.

It is found in the cell membrane. The chain is L-asparagine permease (ansP) from Streptomyces coelicolor (strain ATCC BAA-471 / A3(2) / M145).